A 407-amino-acid polypeptide reads, in one-letter code: 1-deoxy-D-xylulose 5-phosphate reductoisomerase (407 aa).

NADPH-binding residues include Thr-22, Gly-23, Ser-24, Ile-25, Gly-48, Asn-51, and Asn-128. Residue Lys-129 coordinates 1-deoxy-D-xylulose 5-phosphate. Glu-130 is an NADPH binding site. Position 152 (Asp-152) interacts with Mn(2+). 4 residues coordinate 1-deoxy-D-xylulose 5-phosphate: Ser-153, Glu-154, Ser-178, and His-201. Residue Glu-154 coordinates Mn(2+). Gly-207 contributes to the NADPH binding site. Residues Ser-214, Asn-219, Lys-220, and Glu-223 each contribute to the 1-deoxy-D-xylulose 5-phosphate site. Glu-223 lines the Mn(2+) pocket.

Belongs to the DXR family. Mg(2+) is required as a cofactor. The cofactor is Mn(2+).

The catalysed reaction is 2-C-methyl-D-erythritol 4-phosphate + NADP(+) = 1-deoxy-D-xylulose 5-phosphate + NADPH + H(+). Its pathway is isoprenoid biosynthesis; isopentenyl diphosphate biosynthesis via DXP pathway; isopentenyl diphosphate from 1-deoxy-D-xylulose 5-phosphate: step 1/6. In terms of biological role, catalyzes the NADPH-dependent rearrangement and reduction of 1-deoxy-D-xylulose-5-phosphate (DXP) to 2-C-methyl-D-erythritol 4-phosphate (MEP). The protein is 1-deoxy-D-xylulose 5-phosphate reductoisomerase of Mycobacterium avium (strain 104).